A 110-amino-acid chain; its full sequence is UPF0060 membrane protein Dtpsy_1668 (110 aa).

4 helical membrane-spanning segments follow: residues 7–27 (LALFLLTAVAEIVGCYLPWLW), 33–53 (SAWLLVPAAASLALFAWLLTL), 63–83 (AAYGGVYVAVALVWLWTVDGV), and 86–106 (GPWDWLGVSVTLCGMAIIAFA).

This sequence belongs to the UPF0060 family.

Its subcellular location is the cell inner membrane. In Acidovorax ebreus (strain TPSY) (Diaphorobacter sp. (strain TPSY)), this protein is UPF0060 membrane protein Dtpsy_1668.